Here is a 77-residue protein sequence, read N- to C-terminus: UPF0349 protein lin2491 (77 aa).

It belongs to the UPF0349 family.

The protein is UPF0349 protein lin2491 of Listeria innocua serovar 6a (strain ATCC BAA-680 / CLIP 11262).